Consider the following 296-residue polypeptide: Formylmethanofuran--tetrahydromethanopterin formyltransferase-like protein (296 aa).

It belongs to the FTR family.

This is Formylmethanofuran--tetrahydromethanopterin formyltransferase-like protein (ehaS) from Methanothermobacter marburgensis (strain ATCC BAA-927 / DSM 2133 / JCM 14651 / NBRC 100331 / OCM 82 / Marburg) (Methanobacterium thermoautotrophicum).